Consider the following 562-residue polypeptide: Potassium-transporting ATPase potassium-binding subunit (562 aa).

Helical transmembrane passes span 6–26 (FLLI…LGGF), 62–82 (YALA…VLLM), 132–152 (GLTV…FALI), 175–195 (LYVL…QGVL), 253–273 (FVQM…FGQV), 283–303 (LIWA…YAEL), 327–347 (FGIL…CGAV), 356–376 (ALGG…FGGV), 379–399 (GLYG…LMIG), 416–436 (MTAL…ALAL), 483–503 (LLLA…VLAI), and 524–544 (GLLF…LTFI).

This sequence belongs to the KdpA family. The system is composed of three essential subunits: KdpA, KdpB and KdpC.

It localises to the cell inner membrane. Functionally, part of the high-affinity ATP-driven potassium transport (or Kdp) system, which catalyzes the hydrolysis of ATP coupled with the electrogenic transport of potassium into the cytoplasm. This subunit binds the periplasmic potassium ions and delivers the ions to the membrane domain of KdpB through an intramembrane tunnel. The polypeptide is Potassium-transporting ATPase potassium-binding subunit (Yersinia pestis bv. Antiqua (strain Antiqua)).